A 243-amino-acid polypeptide reads, in one-letter code: Ribosomal RNA small subunit methyltransferase J (243 aa).

S-adenosyl-L-methionine-binding positions include 112-113 (ER) and aspartate 164.

Belongs to the methyltransferase superfamily. RsmJ family.

The protein resides in the cytoplasm. It catalyses the reaction guanosine(1516) in 16S rRNA + S-adenosyl-L-methionine = N(2)-methylguanosine(1516) in 16S rRNA + S-adenosyl-L-homocysteine + H(+). In terms of biological role, specifically methylates the guanosine in position 1516 of 16S rRNA. This Legionella pneumophila (strain Corby) protein is Ribosomal RNA small subunit methyltransferase J.